The following is a 320-amino-acid chain: Protoheme IX farnesyltransferase (320 aa).

9 helical membrane passes run 38–58, 60–80, 109–129, 132–152, 159–179, 184–204, 222–242, 254–276, and 299–319; these read VIELLLVSTLPTMIFAQRGFP, IGLILATLVGGAFAAGSAGVF, EALVFAWILGAASIAILWFGA, LSAWLGLGAIVFYVVIYTMIL, NIVWGGAAGCFPVLIAWAAVT, WPAIVLFMVIFLWTPPHYWPL, AIAGAKVVSVQVVLYAWAMVA, GWVYTIAAVAAGAWFLYESHALY, and YLTLLFIALAVDPFVGSAIVG.

Belongs to the UbiA prenyltransferase family. Protoheme IX farnesyltransferase subfamily.

The protein localises to the cell membrane. It carries out the reaction heme b + (2E,6E)-farnesyl diphosphate + H2O = Fe(II)-heme o + diphosphate. Its pathway is porphyrin-containing compound metabolism; heme O biosynthesis; heme O from protoheme: step 1/1. In terms of biological role, converts heme B (protoheme IX) to heme O by substitution of the vinyl group on carbon 2 of heme B porphyrin ring with a hydroxyethyl farnesyl side group. In Paenarthrobacter aurescens (strain TC1), this protein is Protoheme IX farnesyltransferase.